The sequence spans 611 residues: Urease subunit alpha 2 (611 aa).

The Urease domain maps to 154–611 (GGIDSHIHFI…LPMAQRYFLF (458 aa)). Residues H159, H161, and K242 each contribute to the Ni(2+) site. An N6-carboxylysine modification is found at K242. Substrate is bound at residue H244. Ni(2+) is bound by residues H271 and H297. H345 (proton donor) is an active-site residue. D385 contributes to the Ni(2+) binding site. Positions 411–434 (GHLAPDQSAKTEQSLDNIMLSPTD) are disordered. Residues 418–434 (SAKTEQSLDNIMLSPTD) show a composition bias toward polar residues.

The protein belongs to the metallo-dependent hydrolases superfamily. Urease alpha subunit family. Heterotrimer of UreA (gamma), UreB (beta) and UreC (alpha) subunits. Three heterotrimers associate to form the active enzyme. Requires Ni cation as cofactor. Post-translationally, carboxylation allows a single lysine to coordinate two nickel ions.

The protein resides in the cytoplasm. The enzyme catalyses urea + 2 H2O + H(+) = hydrogencarbonate + 2 NH4(+). Its pathway is nitrogen metabolism; urea degradation; CO(2) and NH(3) from urea (urease route): step 1/1. The chain is Urease subunit alpha 2 from Psychrobacter cryohalolentis (strain ATCC BAA-1226 / DSM 17306 / VKM B-2378 / K5).